The sequence spans 416 residues: MAEEQGRERDSVPKPSVLFLHPDLGVGGAERLVLDAALALQARGCSVKIWTAHYDPGHCFAESRELPVRCAGDWLPRGLGWGGRGAAVCAYVRMVFLALYVLFLADEEFDVVVCDQVSACIPVFRLARRRKKILFYCHFPDLLLTKRDSFLKRLYRAPIDWIEEYTTGMADCILVNSQFTAAVFKETFKSLSHIDPDVLYPSLNVTSFDSVVPEKLDDLVPKGKKFLLLSINRYERKKNLTLALEALVQLRGRLTSQDWERVHLIVAGGYDERVLENVEHYQELKKMVQQSDLGQYVTFLRSFSDKQKISLLHSCTCVLYTPSNEHFGIVPLEAMYMQCPVIAVNSGGPLESIDHSVTGFLCEPDPVHFSEAIEKFIREPSLKATMGLAGRARVKEKFSPEAFTEQLYRYVTKLLV.

Topologically, residues 1 to 84 (MAEEQGRERD…LPRGLGWGGR (84 aa)) are cytoplasmic. An intramembrane region (helical) is located at residues 85–105 (GAAVCAYVRMVFLALYVLFLA). The Cytoplasmic segment spans residues 106 to 416 (DEEFDVVVCD…LYRYVTKLLV (311 aa)).

This sequence belongs to the glycosyltransferase group 1 family. Glycosyltransferase 4 subfamily.

The protein resides in the endoplasmic reticulum membrane. The catalysed reaction is a beta-D-Man-(1-&gt;4)-beta-D-GlcNAc-(1-&gt;4)-alpha-D-GlcNAc-diphospho-di-trans,poly-cis-dolichol + GDP-alpha-D-mannose = an alpha-D-Man-(1-&gt;3)-beta-D-Man-(1-&gt;4)-beta-D-GlcNAc-(1-&gt;4)-alpha-D-GlcNAc-diphospho-di-trans,poly-cis-dolichol + GDP + H(+). The enzyme catalyses an alpha-D-Man-(1-&gt;3)-beta-D-Man-(1-&gt;4)-beta-D-GlcNAc-(1-&gt;4)-alpha-D-GlcNAc-diphospho-di-trans,poly-cis-dolichol + GDP-alpha-D-mannose = an alpha-D-Man-(1-&gt;3)-[alpha-D-Man-(1-&gt;6)]-beta-D-Man-(1-&gt;4)-beta-D-GlcNAc-(1-&gt;4)-alpha-D-GlcNAc-diphospho-di-trans,poly-cis-dolichol + GDP + H(+). It carries out the reaction a beta-D-Man-(1-&gt;4)-beta-D-GlcNAc-(1-&gt;4)-alpha-D-GlcNAc-diphospho-di-trans,poly-cis-dolichol + GDP-alpha-D-mannose = an alpha-D-Man-(1-&gt;6)-beta-D-Man-(1-&gt;4)-beta-D-GlcNAc-(1-&gt;4)-alpha-D-GlcNAc-diphospho-di-trans,poly-cis-dolichol + GDP + H(+). It catalyses the reaction an alpha-D-Man-(1-&gt;6)-beta-D-Man-(1-&gt;4)-beta-D-GlcNAc-(1-&gt;4)-alpha-D-GlcNAc-diphospho-di-trans,poly-cis-dolichol + GDP-alpha-D-mannose = an alpha-D-Man-(1-&gt;3)-[alpha-D-Man-(1-&gt;6)]-beta-D-Man-(1-&gt;4)-beta-D-GlcNAc-(1-&gt;4)-alpha-D-GlcNAc-diphospho-di-trans,poly-cis-dolichol + GDP + H(+). It participates in protein modification; protein glycosylation. Its function is as follows. Mannosyltransferase that operates in the biosynthetic pathway of dolichol-linked oligosaccharides, the glycan precursors employed in protein asparagine (N)-glycosylation. The assembly of dolichol-linked oligosaccharides begins on the cytosolic side of the endoplasmic reticulum membrane and finishes in its lumen. The sequential addition of sugars to dolichol pyrophosphate produces dolichol-linked oligosaccharides containing fourteen sugars, including two GlcNAcs, nine mannoses and three glucoses. Once assembled, the oligosaccharide is transferred from the lipid to nascent proteins by oligosaccharyltransferases. Catalyzes, on the cytoplasmic face of the endoplasmic reticulum, the addition of the second and third mannose residues to the dolichol-linked oligosaccharide chain, to produce Man3GlcNAc(2)-PP-dolichol core oligosaccharide. Man3GlcNAc(2)-PP-dolichol is a substrate for ALG11, the following enzyme in the biosynthetic pathway. While both alpha 1,3 and alpha 1,6 linkages are possible, the sequential addition of alpha 1,3 followed by alpha 1,6 is probably the preferred route. In Homo sapiens (Human), this protein is Alpha-1,3/1,6-mannosyltransferase ALG2 (ALG2).